Reading from the N-terminus, the 89-residue chain is Pyrin domain-containing protein 1 (89 aa).

Positions 1–89 (MGTKREAILK…EEAARLQRAA (89 aa)) constitute a Pyrin domain.

Interacts with PYCARD/ASC (via pyrin domain). Post-translationally, phosphorylated. As to expression, predominantly expressed in monocytes, macrophages and granulocytes.

It is found in the cytoplasm. Its function is as follows. Associates with PYCARD/ASC and modulates its ability to collaborate with MEFV/pyrin and NLRP3/cryopyrin in NF-kappa-B and pro-caspase-1 activation. Suppresses kinase activity of NF-kappa-B inhibitor kinase (IKK) complex, expression of NF-kappa-B inducible genes and inhibits NF-kappa-B activation by cytokines and LPS. The polypeptide is Pyrin domain-containing protein 1 (Homo sapiens (Human)).